Consider the following 468-residue polypeptide: UDP-N-acetylmuramate--L-alanine ligase (468 aa).

112–118 lines the ATP pocket; it reads GTHGKTT.

This sequence belongs to the MurCDEF family.

The protein resides in the cytoplasm. The catalysed reaction is UDP-N-acetyl-alpha-D-muramate + L-alanine + ATP = UDP-N-acetyl-alpha-D-muramoyl-L-alanine + ADP + phosphate + H(+). It functions in the pathway cell wall biogenesis; peptidoglycan biosynthesis. In terms of biological role, cell wall formation. The sequence is that of UDP-N-acetylmuramate--L-alanine ligase from Neisseria meningitidis serogroup C (strain 053442).